Reading from the N-terminus, the 306-residue chain is Pantothenate kinase (306 aa).

91 to 98 (GSVAVGKS) is a binding site for ATP.

Belongs to the prokaryotic pantothenate kinase family.

It is found in the cytoplasm. The catalysed reaction is (R)-pantothenate + ATP = (R)-4'-phosphopantothenate + ADP + H(+). Its pathway is cofactor biosynthesis; coenzyme A biosynthesis; CoA from (R)-pantothenate: step 1/5. In Streptococcus pyogenes serotype M49 (strain NZ131), this protein is Pantothenate kinase.